The primary structure comprises 60 residues: Large ribosomal subunit protein bL32 (60 aa).

It belongs to the bacterial ribosomal protein bL32 family.

This chain is Large ribosomal subunit protein bL32, found in Thermosipho melanesiensis (strain DSM 12029 / CIP 104789 / BI429).